The sequence spans 484 residues: Gasdermin-D (484 aa).

Tyr-37 is modified (phosphotyrosine). Position 56 is an S-(2-succinyl)cysteine (Cys-56). 2 beta stranded membrane passes run 91–97 (QGSVELA) and 103–108 (KIAGGA). Tyr-158 bears the Phosphotyrosine mark. 2 beta stranded membrane-spanning segments follow: residues 180–186 (GSGRFSL) and 191–197 (CLQGEGQ). Ser-185 is subject to Phosphoserine. S-(2-succinyl)cysteine occurs at positions 191 and 268. Cys-191 carries the S-palmitoyl cysteine lipid modification. The segment at 277–296 (VPAEGAFTEDFQGLRAEVET) is linker helix loop. Cys-309 is subject to S-(2-succinyl)cysteine. Ser-338 is a glycosylation site (O-linked (GlcNAc) serine). Position 467 is an S-(2-succinyl)cysteine (Cys-467).

This sequence belongs to the gasdermin family. As to quaternary structure, homooligomer; homooligomeric ring-shaped pore complex containing 27-28 subunits when inserted in the membrane. Homooligomerization is promoted by the mTORC1 complex in macrophages. In response to a canonical inflammasome stimulus, such as nigericin, recruited to NLRP3 inflammasone with similar kinetics to that of uncleaved CASP1 precursor. Although this recruitment is also observed in the absence of PYCARD, it is more efficient in its presence. In terms of processing, cleavage at Asp-275 by CASP1 (mature and uncleaved precursor forms), CASP4, CASP5 or CASP8 relieves autoinhibition and is sufficient to initiate pyroptosis. Cleavage by CASP1 and CASP4 is not strictly dependent on the consensus cleavage site on GSDMD but depends on an exosite interface on CASP1 that recognizes and binds the Gasdermin-D, C-terminal (GSDMD-CT) part. Cleavage by CASP8 takes place following inactivation of MAP3K7/TAK1 by Yersinia toxin YopJ. Cleavage at Asp-87 by CASP3 or CASP7 inactivates the ability to mediate pyroptosis, but generates the Gasdermin-D, p13 chain, which translocates to the nucleus and acts as a transcription regulator. Cleavage by papain allergen generates the Gasdermin-D, p40 chain. Post-translationally, palmitoylated at Cys-191 by ZDHHC5 and ZDHHC9 in response to microbial infection and danger signals. Palmitoylation takes place before cleavage by caspases (CASP1, CASP4, CASP5 or CASP8) and is required for membrane translocation and pore formation. Depalmitoylated by LYPLA2. Succination of Cys-191 by the Krebs cycle intermediate fumarate, which leads to S-(2-succinyl)cysteine residues, inhibits processing by caspases, and ability to initiate pyroptosis. Succination modification is catalyzed by a non-enzymatic reaction caused by an accumulation of fumarate. In terms of processing, glycosylated: O-GlcNAcylation by OGT leads to reduced cleavage by CASP4 and decreased LPS-induced endothelial cell pyroptosis. Post-translationally, (Microbial infection) Cleaved and inactivated by Protease 3C from Human enterovirus 71 (EV71), preventing GSDMD-mediated pyroptosis. (Microbial infection) Cleaved and inactivated by the 3C-like proteinase nsp5 from human coronavirus SARS-CoV-2, preventing GSDMD-mediated pyroptosis. In terms of processing, (Microbial infection) Ubiquitinated by S.flexneri IpaH7.8, leading to its degradation by the proteasome. Expressed in the suprabasal cells of esophagus, as well as in the isthmus/neck, pit, and gland of the stomach, suggesting preferential expression in differentiating cells.

It localises to the cytoplasm. The protein localises to the cytosol. Its subcellular location is the inflammasome. It is found in the cell membrane. The protein resides in the secreted. It localises to the mitochondrion membrane. The protein localises to the nucleus. Its activity is regulated as follows. The full-length protein before cleavage is inactive: intramolecular interactions between N- and C-terminal domains mediate autoinhibition in the absence of activation signal. The intrinsic pyroptosis-inducing activity is carried by the released N-terminal moiety (Gasdermin-D, N-terminal) following cleavage by caspases CASP1, CASP4, CASP5 or CASP8. Cleavage at Asp-87 by CASP3 or CASP7 inactivates the ability to mediate pyroptosis. Homooligomerization and pore formation is specifically inhibited by VHH(GSDMD-1) and, to a lesser extent, VHH(GSDMD-2) nanobodies, protecting against excessive pyroptosis. Inhibited by small molecule NU6300, which covalently reacts with Cys-191, thereby preventing palmitoylation and pyroptosis. In terms of biological role, precursor of a pore-forming protein that plays a key role in host defense against pathogen infection and danger signals. This form constitutes the precursor of the pore-forming protein: upon cleavage, the released N-terminal moiety (Gasdermin-D, N-terminal) binds to membranes and forms pores, triggering pyroptosis. Promotes pyroptosis in response to microbial infection and danger signals. Produced by the cleavage of gasdermin-D by inflammatory caspases CASP1, CASP4 or CASP5 in response to canonical, as well as non-canonical (such as cytosolic LPS) inflammasome activators. After cleavage, moves to the plasma membrane where it strongly binds to inner leaflet lipids, including monophosphorylated phosphatidylinositols, such as phosphatidylinositol 4-phosphate, bisphosphorylated phosphatidylinositols, such as phosphatidylinositol (4,5)-bisphosphate, as well as phosphatidylinositol (3,4,5)-bisphosphate, and more weakly to phosphatidic acid and phosphatidylserine. Homooligomerizes within the membrane and forms pores of 10-15 nanometers (nm) of inner diameter, allowing the release of mature interleukin-1 (IL1B and IL18) and triggering pyroptosis. Gasdermin pores also allow the release of mature caspase-7 (CASP7). In some, but not all, cells types, pyroptosis is followed by pyroptotic cell death, which is caused by downstream activation of ninjurin-1 (NINJ1), which mediates membrane rupture (cytolysis). Also forms pores in the mitochondrial membrane, resulting in release of mitochondrial DNA (mtDNA) into the cytosol. Gasdermin-D, N-terminal released from pyroptotic cells into the extracellular milieu rapidly binds to and kills both Gram-negative and Gram-positive bacteria, without harming neighboring mammalian cells, as it does not disrupt the plasma membrane from the outside due to lipid-binding specificity. Under cell culture conditions, also active against intracellular bacteria, such as Listeria monocytogenes. Also active in response to MAP3K7/TAK1 inactivation by Yersinia toxin YopJ, which triggers cleavage by CASP8 and subsequent activation. Required for mucosal tissue defense against enteric pathogens. Activation of the non-canonical inflammasome in brain endothelial cells can lead to excessive pyroptosis, leading to blood-brain barrier breakdown. Strongly binds to bacterial and mitochondrial lipids, including cardiolipin. Does not bind to unphosphorylated phosphatidylinositol, phosphatidylethanolamine nor phosphatidylcholine. Functionally, transcription coactivator produced by the cleavage by CASP3 or CASP7 in the upper small intestine in response to dietary antigens. Required to maintain food tolerance in small intestine: translocates to the nucleus and acts as a coactivator for STAT1 to induce the transcription of CIITA and MHC class II molecules, which in turn induce type 1 regulatory T (Tr1) cells in upper small intestine. Its function is as follows. Produced by the cleavage by papain allergen. After cleavage, moves to the plasma membrane and homooligomerizes within the membrane and forms pores of 10-15 nanometers (nm) of inner diameter, allowing the specific release of mature interleukin-33 (IL33), promoting type 2 inflammatory immune response. In Homo sapiens (Human), this protein is Gasdermin-D.